The following is a 101-amino-acid chain: Non-structural protein NS-S (101 aa).

It belongs to the orthobunyavirus NS-S protein family.

This is Non-structural protein NS-S (N) from Equus caballus (Horse).